Consider the following 142-residue polypeptide: Virulence-associated membrane protein 1 (142 aa).

The first 20 residues, M1–A20, serve as a signal peptide directing secretion. The chain crosses the membrane as a helical span at residues I59–L79.

In terms of assembly, monomer.

The protein localises to the membrane. During infection, may play a role in establishing and maintaining biotrophy; the formation of a tight interaction zone between the host and the pathogen. The chain is Virulence-associated membrane protein 1 from Mycosarcoma maydis (Corn smut fungus).